A 209-amino-acid polypeptide reads, in one-letter code: Kynurenine formamidase (209 aa).

Residue W20 coordinates substrate. Zn(2+) contacts are provided by H50, H54, and D56. Residue H60 is the Proton donor/acceptor of the active site. Zn(2+) contacts are provided by H161 and E173.

This sequence belongs to the Cyclase 1 superfamily. KynB family. In terms of assembly, homodimer. Requires Zn(2+) as cofactor.

It catalyses the reaction N-formyl-L-kynurenine + H2O = L-kynurenine + formate + H(+). It participates in amino-acid degradation; L-tryptophan degradation via kynurenine pathway; L-kynurenine from L-tryptophan: step 2/2. Its function is as follows. Catalyzes the hydrolysis of N-formyl-L-kynurenine to L-kynurenine, the second step in the kynurenine pathway of tryptophan degradation. This is Kynurenine formamidase from Bacillus cereus (strain ATCC 10987 / NRS 248).